Consider the following 356-residue polypeptide: Protein RecA (356 aa).

67-74 (GPESSGKT) lines the ATP pocket.

The protein belongs to the RecA family.

It is found in the cytoplasm. Can catalyze the hydrolysis of ATP in the presence of single-stranded DNA, the ATP-dependent uptake of single-stranded DNA by duplex DNA, and the ATP-dependent hybridization of homologous single-stranded DNAs. It interacts with LexA causing its activation and leading to its autocatalytic cleavage. This Yersinia pseudotuberculosis serotype I (strain IP32953) protein is Protein RecA.